The chain runs to 669 residues: MIMTMMQTVRAWQQESDVEHRKQHKQRWRPDGAHISAAYDLNSDNDDGHHRVVHNQNNGSPNSSPNQSTSAFRQRQPHHPPTGQQPPRLPCTVTHFSAHWKTLLILLTLLSASTLTASANVTSTISPPINGSSTDYILLYGESTTSLVPALTTGLSGDGSGAVIEDEEDAEKASEYIFDRTDVRIIFITLYTLVFCCCFFGNLLVILVVTLSRRLRSITNFFLANLAFADFCVGLFCVMQNLSIYLIESWVFGEFLCRMYQFVHSLSYTASIFILVVICMERYFAIVHPITCKQILTAARLRMVIVTVWITSAVYSTPKFVFSKTIKNIHTQDGQEEEICVLDREMFNSKLLDMINFVLLYVMPLLVMTVLYSKIAIALWRSSRGLTPHVVQHQHQQPQQPSCQDIGMGMHNSMYHHHPHHHHHHHQHHQLQSAASSAGVVGVGLGGGGGGGPGPSLASGGSSTTSLSRKQSSKYEKRGVSITESQLDNCKVSLEADRPIVSACRKTSFYHHGHAHHQRAGNASVGGGSGGAGAGATHMSHSSSNVLRARRGVVRMLIIFVLTFALCNLPYHARKMWQYWSRSYRGDSNFNALLTPLTFLVTYFNSGVNPLLYAFLSRNFRKGMKELLLCSWKKGKGKSSSNSSMHHKRKALQTHSLPTDTTHIGNEQL.

A compositionally biased stretch (polar residues) spans 1–15; that stretch reads MIMTMMQTVRAWQQE. The segment at 1–90 is disordered; sequence MIMTMMQTVR…PTGQQPPRLP (90 aa). Residues 1–184 are Extracellular-facing; the sequence is MIMTMMQTVR…EYIFDRTDVR (184 aa). Low complexity predominate over residues 55 to 74; that stretch reads NQNNGSPNSSPNQSTSAFRQ. A glycan (N-linked (GlcNAc...) asparagine) is linked at asparagine 66. Pro residues predominate over residues 79–89; it reads HPPTGQQPPRL. N-linked (GlcNAc...) asparagine glycosylation is found at asparagine 120 and asparagine 130. A helical membrane pass occupies residues 185–205; the sequence is IIFITLYTLVFCCCFFGNLLV. The Cytoplasmic portion of the chain corresponds to 206–217; that stretch reads ILVVTLSRRLRS. The helical transmembrane segment at 218–238 threads the bilayer; it reads ITNFFLANLAFADFCVGLFCV. Over 239–269 the chain is Extracellular; it reads MQNLSIYLIESWVFGEFLCRMYQFVHSLSYT. Asparagine 241 carries an N-linked (GlcNAc...) asparagine glycan. The cysteines at positions 257 and 340 are disulfide-linked. The chain crosses the membrane as a helical span at residues 270-290; the sequence is ASIFILVVICMERYFAIVHPI. Residues 291 to 302 lie on the Cytoplasmic side of the membrane; sequence TCKQILTAARLR. The chain crosses the membrane as a helical span at residues 303–323; that stretch reads MVIVTVWITSAVYSTPKFVFS. Residues 324-350 lie on the Extracellular side of the membrane; that stretch reads KTIKNIHTQDGQEEEICVLDREMFNSK. Residues 351–371 traverse the membrane as a helical segment; sequence LLDMINFVLLYVMPLLVMTVL. Residues 372–552 lie on the Cytoplasmic side of the membrane; it reads YSKIAIALWR…SSNVLRARRG (181 aa). Residues 390–401 are compositionally biased toward low complexity; sequence VVQHQHQQPQQP. Disordered regions lie at residues 390-481 and 515-537; these read VVQH…RGVS and AHHQ…AGAT. A compositionally biased stretch (basic residues) spans 414-429; sequence MYHHHPHHHHHHHQHH. Over residues 441–454 the composition is skewed to gly residues; that stretch reads VGVGLGGGGGGGPG. Residues 455-470 show a composition bias toward low complexity; it reads PSLASGGSSTTSLSRK. The span at 524–534 shows a compositional bias: gly residues; sequence SVGGGSGGAGA. Residues 553–573 traverse the membrane as a helical segment; sequence VVRMLIIFVLTFALCNLPYHA. Residues 574–595 are Extracellular-facing; sequence RKMWQYWSRSYRGDSNFNALLT. Residues 596–616 form a helical membrane-spanning segment; sequence PLTFLVTYFNSGVNPLLYAFL. Residues 617–669 lie on the Cytoplasmic side of the membrane; the sequence is SRNFRKGMKELLLCSWKKGKGKSSSNSSMHHKRKALQTHSLPTDTTHIGNEQL. The segment at 635 to 669 is disordered; sequence GKGKSSSNSSMHHKRKALQTHSLPTDTTHIGNEQL. Residues 653–669 show a composition bias toward polar residues; it reads QTHSLPTDTTHIGNEQL.

This sequence belongs to the G-protein coupled receptor 1 family.

It is found in the cell membrane. Functionally, G-protein coupled receptor which is activated by the Trissin peptide in vitro, leading to increased intracellular calcium ion levels. The sequence is that of Trissin receptor from Drosophila melanogaster (Fruit fly).